Consider the following 337-residue polypeptide: ATP-dependent 6-phosphofructokinase (337 aa).

Glycine 11 lines the ATP pocket. 21 to 25 contributes to the ADP binding site; sequence RAVVR. ATP contacts are provided by residues 72-73 and 102-105; these read RY and GDGS. Aspartate 103 provides a ligand contact to Mg(2+). 125 to 127 provides a ligand contact to substrate; sequence TID. The active-site Proton acceptor is aspartate 127. Arginine 154 serves as a coordination point for ADP. Substrate contacts are provided by residues arginine 162 and 169-171; that span reads MGR. ADP-binding positions include 185-187, lysine 212, and 214-216; these read GAD and KNH. Substrate-binding positions include glutamate 223, arginine 245, and 251–254; that span reads HILR.

This sequence belongs to the phosphofructokinase type A (PFKA) family. ATP-dependent PFK group I subfamily. Prokaryotic clade 'B1' sub-subfamily. In terms of assembly, homotetramer. It depends on Mg(2+) as a cofactor.

The protein resides in the cytoplasm. It carries out the reaction beta-D-fructose 6-phosphate + ATP = beta-D-fructose 1,6-bisphosphate + ADP + H(+). It functions in the pathway carbohydrate degradation; glycolysis; D-glyceraldehyde 3-phosphate and glycerone phosphate from D-glucose: step 3/4. Its activity is regulated as follows. Allosterically activated by ADP and other diphosphonucleosides, and allosterically inhibited by phosphoenolpyruvate. In terms of biological role, catalyzes the phosphorylation of D-fructose 6-phosphate to fructose 1,6-bisphosphate by ATP, the first committing step of glycolysis. The sequence is that of ATP-dependent 6-phosphofructokinase from Streptococcus pyogenes serotype M28 (strain MGAS6180).